Consider the following 196-residue polypeptide: Holliday junction branch migration complex subunit RuvA (196 aa).

Positions 1–62 (MYEYINGLIT…ENDISLYGFI (62 aa)) are domain I. Residues 63–141 (DADEKALFNK…ELASKTGMVD (79 aa)) are domain II. The flexible linker stretch occupies residues 142-148 (SSSNPEQ). Residues 148–196 (QSQALDDALEALLALGYTAKDVKAVAQIIGRNSDTTDGYIRSALKLLVK) form a domain III region.

It belongs to the RuvA family. As to quaternary structure, homotetramer. Forms an RuvA(8)-RuvB(12)-Holliday junction (HJ) complex. HJ DNA is sandwiched between 2 RuvA tetramers; dsDNA enters through RuvA and exits via RuvB. An RuvB hexamer assembles on each DNA strand where it exits the tetramer. Each RuvB hexamer is contacted by two RuvA subunits (via domain III) on 2 adjacent RuvB subunits; this complex drives branch migration. In the full resolvosome a probable DNA-RuvA(4)-RuvB(12)-RuvC(2) complex forms which resolves the HJ.

Its subcellular location is the cytoplasm. Its function is as follows. The RuvA-RuvB-RuvC complex processes Holliday junction (HJ) DNA during genetic recombination and DNA repair, while the RuvA-RuvB complex plays an important role in the rescue of blocked DNA replication forks via replication fork reversal (RFR). RuvA specifically binds to HJ cruciform DNA, conferring on it an open structure. The RuvB hexamer acts as an ATP-dependent pump, pulling dsDNA into and through the RuvAB complex. HJ branch migration allows RuvC to scan DNA until it finds its consensus sequence, where it cleaves and resolves the cruciform DNA. This chain is Holliday junction branch migration complex subunit RuvA, found in Leuconostoc mesenteroides subsp. mesenteroides (strain ATCC 8293 / DSM 20343 / BCRC 11652 / CCM 1803 / JCM 6124 / NCDO 523 / NBRC 100496 / NCIMB 8023 / NCTC 12954 / NRRL B-1118 / 37Y).